We begin with the raw amino-acid sequence, 257 residues long: Snake venom serine protease BITS01A (257 aa).

Residues 1 to 18 (MVLIRVIANLLILQVSYA) form the signal peptide. A propeptide spanning residues 19–24 (QKSSEL) is cleaved from the precursor. Residues 25–248 (VVGGDECDIN…YLPWIQSIIA (224 aa)) form the Peptidase S1 domain. 6 disulfides stabilise this stretch: C31-C162, C49-C65, C97-C255, C141-C209, C173-C188, and C199-C224. The active-site Charge relay system is the H64. A glycan (N-linked (GlcNAc...) asparagine) is linked at N101. The active-site Charge relay system is the D109. Residues N121, N153, and N169 are each glycosylated (N-linked (GlcNAc...) asparagine). S203 serves as the catalytic Charge relay system. 2 N-linked (GlcNAc...) asparagine glycosylation sites follow: N210 and N250.

This sequence belongs to the peptidase S1 family. Snake venom subfamily. Monomer. In terms of tissue distribution, expressed by the venom gland.

It localises to the secreted. Functionally, snake venom serine protease that may act in the hemostasis system of the prey. This Bothrops insularis (Golden lancehead) protein is Snake venom serine protease BITS01A.